The following is a 662-amino-acid chain: DNA ligase (662 aa).

NAD(+) is bound by residues 31–35 (DYEYD), 80–81 (SL), and E109. The active-site N6-AMP-lysine intermediate is the K111. NAD(+) is bound by residues R132, E166, K282, and K306. Zn(2+)-binding residues include C400, C403, C418, and C423. Residues 581 to 662 (KVNNIFEGKT…FEEMLKGENI (82 aa)) enclose the BRCT domain.

This sequence belongs to the NAD-dependent DNA ligase family. LigA subfamily. The cofactor is Mg(2+). Mn(2+) serves as cofactor.

It catalyses the reaction NAD(+) + (deoxyribonucleotide)n-3'-hydroxyl + 5'-phospho-(deoxyribonucleotide)m = (deoxyribonucleotide)n+m + AMP + beta-nicotinamide D-nucleotide.. DNA ligase that catalyzes the formation of phosphodiester linkages between 5'-phosphoryl and 3'-hydroxyl groups in double-stranded DNA using NAD as a coenzyme and as the energy source for the reaction. It is essential for DNA replication and repair of damaged DNA. This is DNA ligase from Thermoanaerobacter pseudethanolicus (strain ATCC 33223 / 39E) (Clostridium thermohydrosulfuricum).